The primary structure comprises 491 residues: Glutamyl-tRNA(Gln) amidotransferase subunit A (491 aa).

Catalysis depends on charge relay system residues Lys77 and Ser152. The active-site Acyl-ester intermediate is Ser176.

It belongs to the amidase family. GatA subfamily. In terms of assembly, heterotrimer of A, B and C subunits.

It carries out the reaction L-glutamyl-tRNA(Gln) + L-glutamine + ATP + H2O = L-glutaminyl-tRNA(Gln) + L-glutamate + ADP + phosphate + H(+). Functionally, allows the formation of correctly charged Gln-tRNA(Gln) through the transamidation of misacylated Glu-tRNA(Gln) in organisms which lack glutaminyl-tRNA synthetase. The reaction takes place in the presence of glutamine and ATP through an activated gamma-phospho-Glu-tRNA(Gln). The chain is Glutamyl-tRNA(Gln) amidotransferase subunit A from Chlamydia trachomatis serovar L2 (strain ATCC VR-902B / DSM 19102 / 434/Bu).